The following is a 60-amino-acid chain: Large ribosomal subunit protein uL30 (60 aa).

It belongs to the universal ribosomal protein uL30 family. As to quaternary structure, part of the 50S ribosomal subunit.

This chain is Large ribosomal subunit protein uL30, found in Lachnoclostridium phytofermentans (strain ATCC 700394 / DSM 18823 / ISDg) (Clostridium phytofermentans).